A 250-amino-acid polypeptide reads, in one-letter code: Thiamine thiazole synthase (250 aa).

NAD(+) is bound by residues Ser-36, Glu-55–Glu-56, Gly-63, Val-126, and His-152–Asp-154. Fe cation contacts are provided by Asp-154 and His-169. Met-216 is a binding site for NAD(+). Position 226 (Arg-226) interacts with glycine.

The protein belongs to the THI4 family. In terms of assembly, homooctamer; tetramer of dimers. Requires Fe(2+) as cofactor.

It catalyses the reaction hydrogen sulfide + glycine + NAD(+) = ADP-5-ethyl-4-methylthiazole-2-carboxylate + nicotinamide + 3 H2O + H(+). The protein operates within cofactor biosynthesis; thiamine diphosphate biosynthesis. Involved in the biosynthesis of the thiazole moiety of thiamine. Catalyzes the conversion of NAD and glycine to adenosine diphosphate 5-(2-hydroxyethyl)-4-methylthiazole-2-carboxylate (ADT), an adenylated thiazole intermediate, using free sulfide as a source of sulfur. This is Thiamine thiazole synthase from Thermotoga maritima (strain ATCC 43589 / DSM 3109 / JCM 10099 / NBRC 100826 / MSB8).